The primary structure comprises 129 residues: Small ribosomal subunit protein uS11 (129 aa).

It belongs to the universal ribosomal protein uS11 family. Part of the 30S ribosomal subunit. Interacts with proteins S7 and S18. Binds to IF-3.

Its function is as follows. Located on the platform of the 30S subunit, it bridges several disparate RNA helices of the 16S rRNA. Forms part of the Shine-Dalgarno cleft in the 70S ribosome. The protein is Small ribosomal subunit protein uS11 of Phocaeicola vulgatus (strain ATCC 8482 / DSM 1447 / JCM 5826 / CCUG 4940 / NBRC 14291 / NCTC 11154) (Bacteroides vulgatus).